The sequence spans 337 residues: S-adenosylmethionine:tRNA ribosyltransferase-isomerase (337 aa).

This sequence belongs to the QueA family. As to quaternary structure, monomer.

The protein localises to the cytoplasm. It carries out the reaction 7-aminomethyl-7-carbaguanosine(34) in tRNA + S-adenosyl-L-methionine = epoxyqueuosine(34) in tRNA + adenine + L-methionine + 2 H(+). Its pathway is tRNA modification; tRNA-queuosine biosynthesis. Functionally, transfers and isomerizes the ribose moiety from AdoMet to the 7-aminomethyl group of 7-deazaguanine (preQ1-tRNA) to give epoxyqueuosine (oQ-tRNA). This Legionella pneumophila (strain Lens) protein is S-adenosylmethionine:tRNA ribosyltransferase-isomerase.